The chain runs to 101 residues: Urease subunit beta (101 aa).

This sequence belongs to the urease beta subunit family. Heterotrimer of UreA (gamma), UreB (beta) and UreC (alpha) subunits. Three heterotrimers associate to form the active enzyme.

The protein resides in the cytoplasm. It catalyses the reaction urea + 2 H2O + H(+) = hydrogencarbonate + 2 NH4(+). The protein operates within nitrogen metabolism; urea degradation; CO(2) and NH(3) from urea (urease route): step 1/1. The polypeptide is Urease subunit beta (Rhodopseudomonas palustris (strain HaA2)).